A 448-amino-acid chain; its full sequence is MSSSLRFTVSPSLLGPHPHELTYQAEAIRIAHRMLHERTGPGAGFTGWLDLPERYDREEFRRIQEAAARIRGDSDVLVVIGIGGSYLGARATVEALGHAFHNLLPPERRGAPQIFFAGTDLSPRYLTELLDVLEDREVSLNVVSKSGTTTEPAIAFRLLRNWMERRYGKEGARRRIYATTDAARGALKQLADAEGYTRFVIPDDVGGRYSVLTAVGLLPIAAAGIDIDALMAGAAAAAAAYSDPDLERNPCYQYAAARNALYRKGMTTEVLVTYEPALKATAEWWKQLFGESEGKDGKGIFPAAAAFTTDLHSLGQYIQEGMRNLFETVVHVERPSVDIPLPPGDEGDGLGFLGGQTLHHVNHTAFLATRLAHTEGGVPNLTLTLPELTPYHYGYMLYFFMKACAISGYLLGVNPFDQPGVEAYKQNMYALLGKPGFEARRAEIEERL.

Residue Glu-291 is the Proton donor of the active site. Active-site residues include His-312 and Lys-425.

It belongs to the GPI family.

The protein resides in the cytoplasm. It carries out the reaction alpha-D-glucose 6-phosphate = beta-D-fructose 6-phosphate. It functions in the pathway carbohydrate biosynthesis; gluconeogenesis. It participates in carbohydrate degradation; glycolysis; D-glyceraldehyde 3-phosphate and glycerone phosphate from D-glucose: step 2/4. Catalyzes the reversible isomerization of glucose-6-phosphate to fructose-6-phosphate. In Symbiobacterium thermophilum (strain DSM 24528 / JCM 14929 / IAM 14863 / T), this protein is Glucose-6-phosphate isomerase.